Consider the following 80-residue polypeptide: Trefoil factor 3 (80 aa).

The signal sequence occupies residues 1-21 (MEARVLWLLALVLALGSSSLA). In terms of domain architecture, P-type spans 30-73 (NLCAVPAKNRVDCGYPEISPEQCVNRGCCFDSSIPEVPWCFKPL). Intrachain disulfides connect cysteine 32/cysteine 58, cysteine 42/cysteine 57, and cysteine 52/cysteine 69.

As to quaternary structure, monomer. Homodimer; disulfide-linked.

It is found in the secreted. The protein localises to the extracellular space. It localises to the extracellular matrix. Its subcellular location is the cytoplasm. Involved in the maintenance and repair of the intestinal mucosa. Promotes the mobility of epithelial cells in healing processes (motogen). The chain is Trefoil factor 3 (TFF3) from Felis catus (Cat).